The following is a 383-amino-acid chain: MVNRINPKAIKAGGTLNLFEKYLTLWVALCIVIGIALGKLLPAVAQTLDSWSIYNVSIPIAICLFFMMYPIMVKIDFSQARQAVKAPKPVILTLVVNWVIKPFTMVIFAQFFLGYLFAPLLTATEIIRGQEVTLANSYIAGCILLGIAPCTAMVLMWGYLSYSNQGLTLVMVAVNSLAMLFLYAPLGKWLLAASNLTVPWQTIVLSVLIYVGLPLAAGIYSRYWILKHKGRQWFESQFLHYLSPIAIVALLLTLILLFAFKGELIVNNPLHIFLIAVPLFIQTNFIFLITYVLGLKLKLSYEDAAPAALIGASNHFEVAIATAVMLFGLNSGAALATVVGVLIEVPVMLMLVEICKKTAFWFPRDPEKATLLDPRCINQEIRI.

Helical transmembrane passes span 25–45 (LWVALCIVIGIALGKLLPAVA), 53–73 (IYNVSIPIAICLFFMMYPIMV), 103–123 (FTMVIFAQFFLGYLFAPLLTA), 139–159 (IAGCILLGIAPCTAMVLMWGY), 166–186 (GLTLVMVAVNSLAMLFLYAPL), 200–220 (WQTIVLSVLIYVGLPLAAGIY), 238–258 (FLHYLSPIAIVALLLTLILLF), 272–292 (IFLIAVPLFIQTNFIFLITYV), 309–329 (LIGASNHFEVAIATAVMLFGL), and 332–352 (GAALATVVGVLIEVPVMLMLV).

Belongs to the arsenical resistance-3 (ACR3) (TC 2.A.59) family.

It localises to the cell membrane. This is an uncharacterized protein from Synechocystis sp. (strain ATCC 27184 / PCC 6803 / Kazusa).